The following is a 207-amino-acid chain: MSKLKIDTKRRFSLLIALVLIISLSSCATTQTNVTTKTVFNQETTYHNLLKLKKWQANGVIGIIYDNQAESANYTYLQDGDNFSIKLYGPLGIGSIEIKGDTNSVSLANSKGQKLTAKDAKTLMLEQLGWYVPVEGLKYWIKAIAIPNIRQTSELNTNNLLSKLSQNGWSISYSNYQLVDSKYPLPTKIRMSRDNLTLKIVIKSWQI.

A signal peptide spans 1–26; it reads MSKLKIDTKRRFSLLIALVLIISLSS. Residue C27 is the site of N-palmitoyl cysteine attachment. C27 carries S-diacylglycerol cysteine lipidation.

It belongs to the LolB family. As to quaternary structure, monomer.

Its subcellular location is the cell outer membrane. Plays a critical role in the incorporation of lipoproteins in the outer membrane after they are released by the LolA protein. In Francisella tularensis subsp. tularensis (strain WY96-3418), this protein is Outer-membrane lipoprotein LolB.